We begin with the raw amino-acid sequence, 288 residues long: 4-diphosphocytidyl-2-C-methyl-D-erythritol kinase (288 aa).

Residue Lys-8 is part of the active site. An ATP-binding site is contributed by 90 to 100; that stretch reads PVGAGLAGGSS. The active site involves Asp-132.

It belongs to the GHMP kinase family. IspE subfamily.

The catalysed reaction is 4-CDP-2-C-methyl-D-erythritol + ATP = 4-CDP-2-C-methyl-D-erythritol 2-phosphate + ADP + H(+). The protein operates within isoprenoid biosynthesis; isopentenyl diphosphate biosynthesis via DXP pathway; isopentenyl diphosphate from 1-deoxy-D-xylulose 5-phosphate: step 3/6. Its function is as follows. Catalyzes the phosphorylation of the position 2 hydroxy group of 4-diphosphocytidyl-2C-methyl-D-erythritol. This Chlamydia trachomatis serovar L2b (strain UCH-1/proctitis) protein is 4-diphosphocytidyl-2-C-methyl-D-erythritol kinase.